A 161-amino-acid polypeptide reads, in one-letter code: Ribonuclease P protein component (161 aa).

Belongs to the RnpA family. In terms of assembly, consists of a catalytic RNA component (M1 or rnpB) and a protein subunit.

The catalysed reaction is Endonucleolytic cleavage of RNA, removing 5'-extranucleotides from tRNA precursor.. Its function is as follows. RNaseP catalyzes the removal of the 5'-leader sequence from pre-tRNA to produce the mature 5'-terminus. It can also cleave other RNA substrates such as 4.5S RNA. The protein component plays an auxiliary but essential role in vivo by binding to the 5'-leader sequence and broadening the substrate specificity of the ribozyme. This is Ribonuclease P protein component from Helicobacter pylori (strain Shi470).